The sequence spans 201 residues: Histone chaperone asf1a-A (201 aa).

The protein belongs to the ASF1 family. In terms of assembly, interacts with histone H3 (including both histone H3.1 and H3.3) and histone H4. Interacts with hira and p60.

It is found in the nucleus. In terms of biological role, histone chaperone that facilitates histone deposition and histone exchange and removal during nucleosome assembly and disassembly. Not critical for histone deposition during nucleosome assembly. The polypeptide is Histone chaperone asf1a-A (asf1aa) (Xenopus laevis (African clawed frog)).